The primary structure comprises 197 residues: Phospholipid hydroperoxide glutathione peroxidase (197 aa).

Ser40 is modified (phosphoserine). The active site involves Sec73. Residue Sec73 is a non-standard amino acid, selenocysteine.

The protein belongs to the glutathione peroxidase family. Monomer. Has a tendency to form higher mass oligomers. Interacts with FUNDC1; this interaction promotes GPX4 recruitment into mitochondria through TOM/TIM complex where it is degraded by mitophagy. As to expression, expressed very intensively in the testis and weakly in lung, heart, and cerebellum.

It localises to the mitochondrion. The protein localises to the cytoplasm. It catalyses the reaction a hydroperoxy polyunsaturated fatty acid + 2 glutathione = a hydroxy polyunsaturated fatty acid + glutathione disulfide + H2O. The catalysed reaction is 2 glutathione + H2O2 = glutathione disulfide + 2 H2O. The enzyme catalyses tert-butyl hydroperoxide + 2 glutathione = tert-butanol + glutathione disulfide + H2O. It carries out the reaction cumene hydroperoxide + 2 glutathione = 2-phenylpropan-2-ol + glutathione disulfide + H2O. It catalyses the reaction (9S)-hydroperoxy-(10E,12Z)-octadecadienoate + 2 glutathione = (9S)-hydroxy-(10E,12Z)-octadecadienoate + glutathione disulfide + H2O. The catalysed reaction is (13S)-hydroperoxy-(9Z,11E)-octadecadienoate + 2 glutathione = (13S)-hydroxy-(9Z,11E)-octadecadienoate + glutathione disulfide + H2O. The enzyme catalyses (5S)-hydroperoxy-(6E,8Z,11Z,14Z)-eicosatetraenoate + 2 glutathione = (5S)-hydroxy-(6E,8Z,11Z,14Z)-eicosatetraenoate + glutathione disulfide + H2O. It carries out the reaction (12R)-hydroperoxy-(5Z,8Z,10E,14Z)-eicosatetraenoate + 2 glutathione = (12R)-hydroxy-(5Z,8Z,10E,14Z)-eicosatetraenoate + glutathione disulfide + H2O. It catalyses the reaction (12S)-hydroperoxy-(5Z,8Z,10E,14Z)-eicosatetraenoate + 2 glutathione = (12S)-hydroxy-(5Z,8Z,10E,14Z)-eicosatetraenoate + glutathione disulfide + H2O. The catalysed reaction is (15S)-hydroperoxy-(5Z,8Z,11Z,13E)-eicosatetraenoate + 2 glutathione = (15S)-hydroxy-(5Z,8Z,11Z,13E)-eicosatetraenoate + glutathione disulfide + H2O. The enzyme catalyses (5S)-hydroperoxy-(6E,8Z,11Z,14Z,17Z)-eicosapentaenoate + 2 glutathione = (5S)-hydroxy-(6E,8Z,11Z,14Z,17Z)-eicosapentaenoate + glutathione disulfide + H2O. It carries out the reaction (12S)-hydroperoxy-(5Z,8Z,10E,14Z,17Z)-eicosapentaenoate + 2 glutathione = (12S)-hydroxy-(5Z,8Z,10E,14Z,17Z)-eicosapentaenoate + glutathione disulfide + H2O. It catalyses the reaction (15S)-hydroperoxy-(5Z,8Z,11Z,13E,17Z)-eicosapentaenoate + 2 glutathione = (15S)-hydroxy-(5Z,8Z,11Z,13E,17Z)-eicosapentaenoate + glutathione disulfide + H2O. The catalysed reaction is (15S)-hydroperoxy-(11Z,13E)-eicosadienoate + 2 glutathione = (15S)-hydroxy-(11Z,13E)-eicosadienoate + glutathione disulfide + H2O. The enzyme catalyses (17S)-hydroperoxy-(4Z,7Z,10Z,13Z,15E,19Z)-docosahexaenoate + 2 glutathione = (17S)-hydroxy-(4Z,7Z,10Z,13Z,15E,19Z)-docosahexaenoate + glutathione disulfide + H2O. It carries out the reaction a hydroperoxy-1,2-diacyl-glycero-3-phosphocholine + 2 glutathione = a hydroxy-1,2-diacyl-glycero-3-phosphocholine + glutathione disulfide + H2O. Its function is as follows. Essential antioxidant peroxidase that directly reduces phospholipid hydroperoxide even if they are incorporated in membranes and lipoproteins. Can also reduce fatty acid hydroperoxide, cholesterol hydroperoxide and thymine hydroperoxide. Plays a key role in protecting cells from oxidative damage by preventing membrane lipid peroxidation. Required to prevent cells from ferroptosis, a non-apoptotic cell death resulting from an iron-dependent accumulation of lipid reactive oxygen species. The presence of selenocysteine (Sec) versus Cys at the active site is essential for life: it provides resistance to overoxidation and prevents cells against ferroptosis. The presence of Sec at the active site is also essential for the survival of a specific type of parvalbumin-positive interneurons, thereby preventing against fatal epileptic seizures. May be required to protect cells from the toxicity of ingested lipid hydroperoxides. Required for normal sperm development and male fertility. Essential for maturation and survival of photoreceptor cells. Plays a role in a primary T-cell response to viral and parasitic infection by protecting T-cells from ferroptosis and by supporting T-cell expansion. Plays a role of glutathione peroxidase in platelets in the arachidonic acid metabolism. Reduces hydroperoxy ester lipids formed by a 15-lipoxygenase that may play a role as down-regulator of the cellular 15-lipoxygenase pathway. Can also reduce small soluble hydroperoxides such as H2O2, cumene hydroperoxide and tert-butyl hydroperoxide. The sequence is that of Phospholipid hydroperoxide glutathione peroxidase from Macaca fuscata fuscata (Japanese macaque).